The sequence spans 459 residues: ADP-specific phosphofructokinase (459 aa).

The ADPK domain occupies 1–457 (MMEFLKDFQK…FASYLSLLKR (457 aa)). Mg(2+) contacts are provided by Glu268, Glu298, and Asp441. Asp441 serves as the catalytic Proton acceptor.

It belongs to the carbohydrate kinase PfkC family. Mg(2+) serves as cofactor.

Its subcellular location is the cytoplasm. It carries out the reaction beta-D-fructose 6-phosphate + ADP = beta-D-fructose 1,6-bisphosphate + AMP + H(+). It functions in the pathway carbohydrate degradation; glycolysis. Catalyzes the phosphorylation of fructose 6-phosphate to fructose 1,6-bisphosphate using ADP as the phosphate donor. This is ADP-specific phosphofructokinase from Thermococcus litoralis.